Here is a 154-residue protein sequence, read N- to C-terminus: Melatonin receptor type 1A (154 aa).

Topologically, residues 1–19 (YCYICHSLKYDRWYSNRNS) are cytoplasmic. A helical membrane pass occupies residues 20–40 (LCCVFLICVLTLVAIVPNLCM). Topologically, residues 41 to 62 (GTLQYDPRIYSCTFAQSVSSAY) are extracellular. A helical transmembrane segment spans residues 63–83 (TIAVVVFHFLVPMVIVIFRYL). The Cytoplasmic portion of the chain corresponds to 84-115 (RIWVLVLQIRWRAKPENNPRLKPQDFRNFVTM). The helical transmembrane segment at 116-136 (FVVFVLFAICWAPLNFIGLAV) threads the bilayer. Over 137 to 149 (ASDPASMAPRIPE) the chain is Extracellular.

The protein belongs to the G-protein coupled receptor 1 family.

The protein localises to the cell membrane. High affinity receptor for melatonin. Likely to mediate the reproductive and circadian actions of melatonin. The activity of this receptor is mediated by pertussis toxin sensitive G proteins that inhibit adenylate cyclase activity. This Sus scrofa (Pig) protein is Melatonin receptor type 1A (MTNR1A).